A 430-amino-acid polypeptide reads, in one-letter code: Adenylosuccinate synthetase (430 aa).

GTP-binding positions include 12–18 (GDEGKGK) and 40–42 (GHT). Aspartate 13 serves as the catalytic Proton acceptor. Positions 13 and 40 each coordinate Mg(2+). IMP contacts are provided by residues 13-16 (DEGK), 38-41 (NAGH), threonine 128, arginine 142, glutamine 223, threonine 238, and arginine 302. The Proton donor role is filled by histidine 41. 298 to 304 (TTTGRPR) contributes to the substrate binding site. Residues arginine 304, 330–332 (SID), and 412–414 (SVG) contribute to the GTP site.

The protein belongs to the adenylosuccinate synthetase family. Homodimer. Requires Mg(2+) as cofactor.

It is found in the cytoplasm. The catalysed reaction is IMP + L-aspartate + GTP = N(6)-(1,2-dicarboxyethyl)-AMP + GDP + phosphate + 2 H(+). Its pathway is purine metabolism; AMP biosynthesis via de novo pathway; AMP from IMP: step 1/2. In terms of biological role, plays an important role in the de novo pathway of purine nucleotide biosynthesis. Catalyzes the first committed step in the biosynthesis of AMP from IMP. This Streptococcus uberis (strain ATCC BAA-854 / 0140J) protein is Adenylosuccinate synthetase.